The chain runs to 106 residues: Cell division protein FtsB (106 aa).

Topologically, residues 1 to 3 (MGK) are cytoplasmic. The helical transmembrane segment at 4–21 (LTLLLLVLLGWLQYSLWL) threads the bilayer. The Periplasmic portion of the chain corresponds to 22-106 (GKNGIHDYVR…SRPSTPNNTQ (85 aa)). Residues 29–70 (YVRVKNDVAMQERNNSKLKARNDQLSAEIDDLTGGQEAIEER) are a coiled coil.

The protein belongs to the FtsB family. As to quaternary structure, part of a complex composed of FtsB, FtsL and FtsQ.

It is found in the cell inner membrane. Functionally, essential cell division protein. May link together the upstream cell division proteins, which are predominantly cytoplasmic, with the downstream cell division proteins, which are predominantly periplasmic. This chain is Cell division protein FtsB, found in Photorhabdus laumondii subsp. laumondii (strain DSM 15139 / CIP 105565 / TT01) (Photorhabdus luminescens subsp. laumondii).